Consider the following 161-residue polypeptide: Beta-lactoglobulin-1 (161 aa).

Intrachain disulfides connect C66-C159 and C106-C119.

It belongs to the calycin superfamily. Lipocalin family. As to quaternary structure, monomer. As to expression, synthesized in mammary gland and secreted in milk.

It is found in the secreted. Primary component of whey, it binds retinol and is probably involved in the transport of that molecule. The sequence is that of Beta-lactoglobulin-1 (LGB1) from Canis lupus familiaris (Dog).